Consider the following 377-residue polypeptide: Histone deacetylase 8 (377 aa).

The histone deacetylase stretch occupies residues 14–324 (LVPVYIYSPE…WTYLTGVILG (311 aa)). A Phosphoserine modification is found at serine 39. Residue aspartate 101 coordinates substrate. Histidine 143 functions as the Proton acceptor in the catalytic mechanism. Substrate is bound at residue glycine 151. The a divalent metal cation site is built by aspartate 178, histidine 180, and aspartate 267. Tyrosine 306 is a binding site for substrate.

Belongs to the histone deacetylase family. HD type 1 subfamily. As to quaternary structure, interacts with PEPB2-MYH11, a fusion protein consisting of the 165 N-terminal residues of CBF-beta (PEPB2) with the tail region of MYH11 produced by the inversion Inv(16)(p13q22), a translocation associated with acute myeloid leukemia of M4EO subtype. The PEPB2-MYH1 fusion protein also interacts with RUNX1, a well known transcriptional regulator, suggesting that the interaction with HDAC8 may participate in the conversion of RUNX1 into a constitutive transcriptional repressor. Interacts with CBFA2T3. Interacts with phosphorylated SMG5/EST1B; this interaction protects SMG5 from ubiquitin-mediated degradation. Associates with alpha-SMA (smooth muscle alpha-actin). A divalent metal cation serves as cofactor. In terms of processing, phosphorylated by PKA on serine 39. Phosphorylation reduces deacetylase activity observed preferentially on histones H3 and H4. Weakly expressed in most tissues. Expressed at higher level in heart, brain, kidney and pancreas and also in liver, lung, placenta, prostate and kidney.

The protein localises to the nucleus. The protein resides in the chromosome. It is found in the cytoplasm. It catalyses the reaction N(6)-acetyl-L-lysyl-[histone] + H2O = L-lysyl-[histone] + acetate. The enzyme catalyses N(6)-acetyl-L-lysyl-[protein] + H2O = L-lysyl-[protein] + acetate. The catalysed reaction is N(6)-(2E)-butenoyl-L-lysyl-[protein] + H2O = (2E)-2-butenoate + L-lysyl-[protein]. With respect to regulation, its activity is inhibited by trichostatin A (TSA), suberoylanilide hydroxamic acid (SAHA), 3-(1-methyl-4-phenylacetyl-1H-2-pyrrolyl)-N-hydroxy-2-propenamide (APHA), 4-dimethylamino-N-(6-hydroxycarbamoyethyl)benzamide-N-hydroxy-7-(4-dimethylaminobenzoyl)aminoheptanamide (MS-344), 5-(4-methyl-benzoylamino)-biphenyl-3,4'-dicarboxylic acid 3-dimethylamide 4'-hydroxyamide (CRA-A) and butyrate. Its function is as follows. Histone deacetylase that catalyzes the deacetylation of lysine residues on the N-terminal part of the core histones (H2A, H2B, H3 and H4). Histone deacetylation gives a tag for epigenetic repression and plays an important role in transcriptional regulation, cell cycle progression and developmental events. Histone deacetylases act via the formation of large multiprotein complexes. Also involved in the deacetylation of cohesin complex protein SMC3 regulating release of cohesin complexes from chromatin. May play a role in smooth muscle cell contractility. In addition to protein deacetylase activity, also has protein-lysine deacylase activity: acts as a protein decrotonylase by mediating decrotonylation ((2E)-butenoyl) of histones. The sequence is that of Histone deacetylase 8 from Homo sapiens (Human).